The primary structure comprises 409 residues: Arginine deiminase (409 aa).

The active-site Amidino-cysteine intermediate is the Cys-399.

It belongs to the arginine deiminase family.

The protein localises to the cytoplasm. The enzyme catalyses L-arginine + H2O = L-citrulline + NH4(+). Its pathway is amino-acid degradation; L-arginine degradation via ADI pathway; carbamoyl phosphate from L-arginine: step 1/2. This Streptococcus gordonii (strain Challis / ATCC 35105 / BCRC 15272 / CH1 / DL1 / V288) protein is Arginine deiminase.